Reading from the N-terminus, the 954-residue chain is Centrosomal protein of 112 kDa (954 aa).

Residues 276–954 (QKHDAEVQKI…EELTTYQSRR (679 aa)) are a coiled coil.

The protein resides in the cytoplasm. It localises to the cytoskeleton. It is found in the microtubule organizing center. The protein localises to the centrosome. The polypeptide is Centrosomal protein of 112 kDa (Cep112) (Mus musculus (Mouse)).